A 321-amino-acid chain; its full sequence is Tyrosine recombinase XerC (321 aa).

Positions 16–107 (PSIAQEMTRW…GLRSFGRFLE (92 aa)) constitute a Core-binding (CB) domain. Residues 128–315 (SLPKPLPMAS…DSERLLEVYA (188 aa)) form the Tyr recombinase domain. Residues R173, K199, H267, R270, and H293 contribute to the active site. The O-(3'-phospho-DNA)-tyrosine intermediate role is filled by Y302.

It belongs to the 'phage' integrase family. XerC subfamily. Forms a cyclic heterotetrameric complex composed of two molecules of XerC and two molecules of XerD.

The protein resides in the cytoplasm. In terms of biological role, site-specific tyrosine recombinase, which acts by catalyzing the cutting and rejoining of the recombining DNA molecules. The XerC-XerD complex is essential to convert dimers of the bacterial chromosome into monomers to permit their segregation at cell division. It also contributes to the segregational stability of plasmids. In Bradyrhizobium diazoefficiens (strain JCM 10833 / BCRC 13528 / IAM 13628 / NBRC 14792 / USDA 110), this protein is Tyrosine recombinase XerC.